We begin with the raw amino-acid sequence, 199 residues long: Adenylyl-sulfate kinase (199 aa).

Residue 31-38 coordinates ATP; the sequence is GLSGSGKS. Serine 105 (phosphoserine intermediate) is an active-site residue.

It belongs to the APS kinase family.

It catalyses the reaction adenosine 5'-phosphosulfate + ATP = 3'-phosphoadenylyl sulfate + ADP + H(+). It functions in the pathway sulfur metabolism; hydrogen sulfide biosynthesis; sulfite from sulfate: step 2/3. Catalyzes the synthesis of activated sulfate. The protein is Adenylyl-sulfate kinase of Marinobacter nauticus (strain ATCC 700491 / DSM 11845 / VT8) (Marinobacter aquaeolei).